The chain runs to 310 residues: Vomeronasal type-1 receptor 50 (310 aa).

The Extracellular segment spans residues 1–16; that stretch reads MSKANLLHTDNNMKIT. Residues 17–37 form a helical membrane-spanning segment; sequence LFSEVSVGISANSILFVVHLC. The Cytoplasmic portion of the chain corresponds to 38-50; it reads KLLHENKPKPIDL. A helical membrane pass occupies residues 51-71; it reads YIAFFSITQLMLLITMGLIAV. The Extracellular segment spans residues 72 to 93; it reads DMFMPWGRWDSTTCQSLIYLHR. An intrachain disulfide couples Cys-85 to Cys-172. The helical transmembrane segment at 94 to 114 threads the bilayer; that stretch reads LLRGLTFCATCLLNVLWTITL. The Cytoplasmic portion of the chain corresponds to 115–134; that stretch reads SPRSSCLTKFKHKSPHHISG. Residues 135–155 traverse the membrane as a helical segment; that stretch reads AFLFFCVLYMSFSSHLLVSII. Over 156 to 193 the chain is Extracellular; sequence ATFNSTSDNFLYVTQSCSILPVSYSRTSILSTMMTMRE. Asn-159 is a glycosylation site (N-linked (GlcNAc...) asparagine). A helical membrane pass occupies residues 194-214; it reads AFLIGLMALSSGYVVVLLWRH. The Cytoplasmic segment spans residues 215-237; it reads KKQARHLHSTSLSSKASPEQRAT. A helical transmembrane segment spans residues 238–258; that stretch reads STIMLLMGFFVVLYILDTVIF. The Extracellular portion of the chain corresponds to 259-269; sequence QARLKFKDVST. The chain crosses the membrane as a helical span at residues 270 to 290; the sequence is FFCVKIIISHSYATFSPFVFI. Topologically, residues 291-310 are cytoplasmic; that stretch reads CNDKYMIKFVTSMCGRIVNV.

The protein belongs to the G-protein coupled receptor 1 family. In terms of tissue distribution, expressed in a subset of sensory neurons located in the apical layer of the vomeronasal organ.

It localises to the cell membrane. Putative pheromone receptor implicated in the regulation of social and reproductive behavior. In Mus musculus (Mouse), this protein is Vomeronasal type-1 receptor 50 (Vmn1r50).